The chain runs to 449 residues: Tubulin beta-5 chain (449 aa).

The GTP site is built by Gln-11, Glu-70, Ser-139, Gly-143, Thr-144, Gly-145, Asn-205, and Asn-227. Mg(2+) is bound at residue Glu-70. Residues 427–449 form a disordered region; that stretch reads QDATADEEGEYDVEEEEEGDYET. A compositionally biased stretch (acidic residues) spans 430 to 449; sequence TADEEGEYDVEEEEEGDYET.

Belongs to the tubulin family. Dimer of alpha and beta chains. A typical microtubule is a hollow water-filled tube with an outer diameter of 25 nm and an inner diameter of 15 nM. Alpha-beta heterodimers associate head-to-tail to form protofilaments running lengthwise along the microtubule wall with the beta-tubulin subunit facing the microtubule plus end conferring a structural polarity. Microtubules usually have 13 protofilaments but different protofilament numbers can be found in some organisms and specialized cells. The cofactor is Mg(2+).

It localises to the cytoplasm. The protein localises to the cytoskeleton. Tubulin is the major constituent of microtubules, a cylinder consisting of laterally associated linear protofilaments composed of alpha- and beta-tubulin heterodimers. Microtubules grow by the addition of GTP-tubulin dimers to the microtubule end, where a stabilizing cap forms. Below the cap, tubulin dimers are in GDP-bound state, owing to GTPase activity of alpha-tubulin. This Arabidopsis thaliana (Mouse-ear cress) protein is Tubulin beta-5 chain (TUBB5).